Here is a 488-residue protein sequence, read N- to C-terminus: Malonate-semialdehyde dehydrogenase 1 (488 aa).

NAD(+)-binding residues include F156, K180, E183, R184, S233, and S255. C288 acts as the Nucleophile in catalysis. An NAD(+)-binding site is contributed by E387.

The protein belongs to the aldehyde dehydrogenase family. IolA subfamily. As to quaternary structure, homotetramer.

The enzyme catalyses 3-oxopropanoate + NAD(+) + CoA + H2O = hydrogencarbonate + acetyl-CoA + NADH + H(+). The catalysed reaction is 2-methyl-3-oxopropanoate + NAD(+) + CoA + H2O = propanoyl-CoA + hydrogencarbonate + NADH + H(+). It participates in polyol metabolism; myo-inositol degradation into acetyl-CoA; acetyl-CoA from myo-inositol: step 7/7. Its function is as follows. Catalyzes the oxidation of malonate semialdehyde (MSA) and methylmalonate semialdehyde (MMSA) into acetyl-CoA and propanoyl-CoA, respectively. Is involved in a myo-inositol catabolic pathway. Bicarbonate, and not CO2, is the end-product of the enzymatic reaction. In Geobacillus kaustophilus (strain HTA426), this protein is Malonate-semialdehyde dehydrogenase 1.